We begin with the raw amino-acid sequence, 458 residues long: tRNA modification GTPase MnmE (458 aa).

The (6S)-5-formyl-5,6,7,8-tetrahydrofolate site is built by Arg-22, Glu-84, and Arg-123. Positions Gly-220–Phe-379 constitute a TrmE-type G domain. Asn-230 serves as a coordination point for K(+). GTP-binding positions include Asn-230–Ser-235, Thr-249–Thr-255, and Asp-274–Gly-277. Ser-234 provides a ligand contact to Mg(2+). Residues Thr-249, Ile-251, and Thr-254 each coordinate K(+). Mg(2+) is bound at residue Thr-255. Lys-458 is a (6S)-5-formyl-5,6,7,8-tetrahydrofolate binding site.

Belongs to the TRAFAC class TrmE-Era-EngA-EngB-Septin-like GTPase superfamily. TrmE GTPase family. Homodimer. Heterotetramer of two MnmE and two MnmG subunits. K(+) serves as cofactor.

Its subcellular location is the cytoplasm. In terms of biological role, exhibits a very high intrinsic GTPase hydrolysis rate. Involved in the addition of a carboxymethylaminomethyl (cmnm) group at the wobble position (U34) of certain tRNAs, forming tRNA-cmnm(5)s(2)U34. This chain is tRNA modification GTPase MnmE, found in Bacillus anthracis.